Reading from the N-terminus, the 399-residue chain is Argininosuccinate synthase (399 aa).

ATP-binding positions include 10 to 18 and alanine 38; that span reads AYSGGVDTS. Tyrosine 89 contributes to the L-citrulline binding site. Residue glycine 119 coordinates ATP. The L-aspartate site is built by threonine 121, asparagine 125, and aspartate 126. Asparagine 125 lines the L-citrulline pocket. Residues arginine 129, serine 177, serine 186, glutamate 262, and tyrosine 274 each contribute to the L-citrulline site.

The protein belongs to the argininosuccinate synthase family. Type 1 subfamily. In terms of assembly, homotetramer.

It localises to the cytoplasm. It catalyses the reaction L-citrulline + L-aspartate + ATP = 2-(N(omega)-L-arginino)succinate + AMP + diphosphate + H(+). Its pathway is amino-acid biosynthesis; L-arginine biosynthesis; L-arginine from L-ornithine and carbamoyl phosphate: step 2/3. The sequence is that of Argininosuccinate synthase from Picosynechococcus sp. (strain ATCC 27264 / PCC 7002 / PR-6) (Agmenellum quadruplicatum).